Here is a 144-residue protein sequence, read N- to C-terminus: Large ribosomal subunit protein uL15 (144 aa).

The interval 1 to 58 (MHLNTLSPAPGSHKARKRCGRGIGSGIGKTGGRGHKGQKSRSGGSVRPGFEGGQMPLK) is disordered. Residues 21–31 (RGIGSGIGKTG) show a composition bias toward gly residues.

This sequence belongs to the universal ribosomal protein uL15 family. In terms of assembly, part of the 50S ribosomal subunit.

Functionally, binds to the 23S rRNA. This is Large ribosomal subunit protein uL15 from Colwellia psychrerythraea (strain 34H / ATCC BAA-681) (Vibrio psychroerythus).